A 497-amino-acid polypeptide reads, in one-letter code: Proline--tRNA ligase (497 aa).

The protein belongs to the class-II aminoacyl-tRNA synthetase family. ProS type 3 subfamily. In terms of assembly, homodimer.

The protein resides in the cytoplasm. It carries out the reaction tRNA(Pro) + L-proline + ATP = L-prolyl-tRNA(Pro) + AMP + diphosphate. Its function is as follows. Catalyzes the attachment of proline to tRNA(Pro) in a two-step reaction: proline is first activated by ATP to form Pro-AMP and then transferred to the acceptor end of tRNA(Pro). The sequence is that of Proline--tRNA ligase from Deinococcus geothermalis (strain DSM 11300 / CIP 105573 / AG-3a).